The primary structure comprises 494 residues: Probable cytosol aminopeptidase (494 aa).

Residues Lys260 and Asp265 each coordinate Mn(2+). Lys272 is an active-site residue. Positions 283, 342, and 344 each coordinate Mn(2+). Residue Arg346 is part of the active site.

It belongs to the peptidase M17 family. The cofactor is Mn(2+).

It is found in the cytoplasm. It catalyses the reaction Release of an N-terminal amino acid, Xaa-|-Yaa-, in which Xaa is preferably Leu, but may be other amino acids including Pro although not Arg or Lys, and Yaa may be Pro. Amino acid amides and methyl esters are also readily hydrolyzed, but rates on arylamides are exceedingly low.. The catalysed reaction is Release of an N-terminal amino acid, preferentially leucine, but not glutamic or aspartic acids.. In terms of biological role, presumably involved in the processing and regular turnover of intracellular proteins. Catalyzes the removal of unsubstituted N-terminal amino acids from various peptides. This Bacillus cereus (strain B4264) protein is Probable cytosol aminopeptidase.